The primary structure comprises 585 residues: Ras-specific guanine nucleotide-releasing factor RalGPS1 (585 aa).

The Ras-GEF domain occupies Thr-50 to Gly-289. Disordered regions lie at residues Gly-289–Ser-342 and Arg-378–Met-410. Over residues Ala-303–Ala-312 the composition is skewed to low complexity. The PXXP motif lies at Pro-330 to Pro-333. Residues Thr-385 to Leu-396 show a composition bias toward polar residues. Residues Val-459 to Lys-571 enclose the PH domain. The interval Thr-461–Glu-585 is required for stimulation of nucleotide exchange by RALA.

Interacts with the SH3 domains of GRB2, NCK1, PLCG1 and SRC.

It localises to the cytoplasm. It is found in the cell membrane. Guanine nucleotide exchange factor for the small GTPase RALA. May be involved in cytoskeleton organization. The protein is Ras-specific guanine nucleotide-releasing factor RalGPS1 (Ralgps1) of Mus musculus (Mouse).